The primary structure comprises 674 residues: Pentatricopeptide repeat-containing protein At4g17616 (674 aa).

PPR repeat units lie at residues 409–443 (GSRL…GYPM), 444–478 (ELAT…GLIT), 519–553 (MLYE…KIPP), 554–584 (TVQS…IKRN), and 593–627 (TQDL…DMYN).

Belongs to the PPR family. P subfamily.

The sequence is that of Pentatricopeptide repeat-containing protein At4g17616 from Arabidopsis thaliana (Mouse-ear cress).